Here is a 367-residue protein sequence, read N- to C-terminus: Mating-type protein ALPHA2 (367 aa).

Residues Gly-273–Arg-338 constitute a DNA-binding region (homeobox; TALE-type).

It belongs to the TALE/M-ATYP homeobox family. Forms a heterodimer with A1.

The protein resides in the nucleus. Functionally, mating type proteins are sequence specific DNA-binding proteins that act as master switches in yeast differentiation by controlling gene expression in a cell type-specific fashion. Transcriptional corepressor that acts in conjunction with A1 to repress transcription of haploid-specific genes. The chain is Mating-type protein ALPHA2 (MATB2) from Yarrowia lipolytica (strain CLIB 122 / E 150) (Yeast).